Consider the following 448-residue polypeptide: Trigger factor (448 aa).

The 86-residue stretch at 172–257 (GDRVTVDFVG…MKKIEWPHLP (86 aa)) folds into the PPIase FKBP-type domain.

It belongs to the FKBP-type PPIase family. Tig subfamily.

It localises to the cytoplasm. The catalysed reaction is [protein]-peptidylproline (omega=180) = [protein]-peptidylproline (omega=0). Involved in protein export. Acts as a chaperone by maintaining the newly synthesized protein in an open conformation. Functions as a peptidyl-prolyl cis-trans isomerase. The protein is Trigger factor of Burkholderia cenocepacia (strain HI2424).